The following is a 681-amino-acid chain: Proline-rich receptor-like protein kinase PERK8 (681 aa).

Over residues 1–11 the composition is skewed to pro residues; the sequence is MSLVPPLPILS. The segment at 1–231 is disordered; sequence MSLVPPLPIL…TLPSSSPGKS (231 aa). Residues 1–237 lie on the Extracellular side of the membrane; sequence MSLVPPLPIL…PGKSEVGTGG (237 aa). An N-linked (GlcNAc...) asparagine glycan is attached at N16. Over residues 21–163 the composition is skewed to pro residues; it reads APPPLQTQPT…SPPKPSPSTP (143 aa). Residues 177-191 show a composition bias toward low complexity; it reads TSASPPSSNPTDPST. The span at 192–201 shows a compositional bias: pro residues; it reads LAPPPTPLPV. The span at 214–229 shows a compositional bias: polar residues; that stretch reads PASNNGNNTLPSSSPG. An N-linked (GlcNAc...) asparagine glycan is attached at N220. A helical transmembrane segment spans residues 238–258; sequence IVAIGVIVGLVFLSLFVMGVW. The Cytoplasmic segment spans residues 259–681; sequence FTRKRKRKDP…GSRDQSRFVP (423 aa). The region spanning 339 to 617 is the Protein kinase domain; sequence FSEKNLLGEG…SQVVRALDTL (279 aa). ATP is bound by residues 345–353 and K367; that span reads LGEGGFGCV. Y412 bears the Phosphotyrosine mark. D463 (proton acceptor) is an active-site residue. Phosphoserine occurs at positions 467 and 498. T499 and T504 each carry phosphothreonine. Y512 is subject to Phosphotyrosine.

Belongs to the protein kinase superfamily. Ser/Thr protein kinase family. In terms of assembly, interacts with KIPK1 and KIPK2 (via its cytosolic domain). Mostly expressed in seedlings, roots, inflorescence bolts and flower buds.

The protein resides in the cell membrane. The enzyme catalyses L-seryl-[protein] + ATP = O-phospho-L-seryl-[protein] + ADP + H(+). The catalysed reaction is L-threonyl-[protein] + ATP = O-phospho-L-threonyl-[protein] + ADP + H(+). Its function is as follows. Could be involved in the negative regulation of root growth. The protein is Proline-rich receptor-like protein kinase PERK8 (PERK8) of Arabidopsis thaliana (Mouse-ear cress).